A 206-amino-acid polypeptide reads, in one-letter code: Sclerostin domain-containing protein 1 (206 aa).

Positions 1 to 23 (MLPPAIHFYLLPLACILMKSCLA) are cleaved as a signal peptide. Residue Asn47 is glycosylated (N-linked (GlcNAc...) asparagine). 4 disulfide bridges follow: Cys75–Cys133, Cys89–Cys147, Cys100–Cys163, and Cys104–Cys165. A CTCK domain is found at 75–170 (CRELRSTKYI…TACKCKRYTR (96 aa)). The N-linked (GlcNAc...) asparagine glycan is linked to Asn173. Residues 176-206 (SHNFESMSPAKPVQHHRERKRASKSSKHSMS) are disordered. Positions 188–206 (VQHHRERKRASKSSKHSMS) are enriched in basic residues.

The protein belongs to the sclerostin family. Interacts with BMP2, BMP4, BMP6 and BMP7 with high affinity.

The protein resides in the secreted. Directly antagonizes activity of BMP2, BMP4, BMP6 and BMP7 in a dose-dependent manner. Enhances Wnt signaling and inhibits TGF-beta signaling. May be involved in the onset of endometrial receptivity for implantation/sensitization for the decidual cell reaction. The protein is Sclerostin domain-containing protein 1 (SOSTDC1) of Pongo abelii (Sumatran orangutan).